Reading from the N-terminus, the 273-residue chain is MPRLEEIDDFNDIDDLDMELAELDPSLRTPIAPKITPKVVRSQDQENPAFLPGTNNNSNSNNNSSNEKEQLSFINPKTGKVERSEAISKKDLEEVKRFQVLYPCYFDINRSHKEGRRVPKELAVENPLAKTMADAVRELGILCIFEGEKCHPQDFGNPGRIRVLFKENGQLIGAATKFKGGKRQLMKAVGEYMKRHPTTIESLREIPYGPDFDNIEFKKIPRVKGFKMNEIVPLHSPFLMGHPMTKSVYETPKITAAEKSFKPPKNKYKVVRR.

The segment at 25-71 (PSLRTPIAPKITPKVVRSQDQENPAFLPGTNNNSNSNNNSSNEKEQL) is disordered. A compositionally biased stretch (low complexity) spans 55 to 65 (NNNSNSNNNSS).

In terms of assembly, fungal signal recognition particle (SRP) complex consists of a 7S RNA molecule (scR1) and at least six protein subunits: SRP72, SRP68, SRP54, SEC65, SRP21 and SRP14.

The protein resides in the cytoplasm. Signal-recognition-particle (SRP) assembly has a crucial role in targeting secretory proteins to the rough endoplasmic reticulum (ER) membrane. SRP is required for the cotranslational protein translocation for ER import and preferentially recognizes strongly hydrophobic signal sequences. It is involved in targeting the nascent chain-ribosome (RNC) complex to the ER and is proposed to participate in the arrest of nascent chain elongation during membrane targeting. SEC65 is required for SRP integrity. This is Signal recognition particle subunit SEC65 (SEC65) from Saccharomyces cerevisiae (strain ATCC 204508 / S288c) (Baker's yeast).